The primary structure comprises 147 residues: Helix-loop-helix protein 13 (147 aa).

The 53-residue stretch at 41–93 (EERQTASIRERKRMCSINVAFIELRNYIPTFPYEKRLSKIDTLNLAIAYINML) folds into the bHLH domain.

In terms of tissue distribution, expressed in hermaphrodite dopaminergic neurons (ADE, CEP, and PDE).

The protein resides in the nucleus. Its subcellular location is the cytoplasm. Its function is as follows. Transcriptional activator. Shown to have a role in the negative regulation of exit from L1 arrest and dauer diapause dependent on IIS signaling (insulin and insulin-like growth factor (IGF) signaling). Hypodermal expression is regulated by IIS/daf-16 while neuronal expression is not under the control of IIS/daf-16. This is Helix-loop-helix protein 13 from Caenorhabditis elegans.